Reading from the N-terminus, the 383-residue chain is Sphingosine kinase 1 (383 aa).

Residues 12 to 159 (PRPCRVLVLL…MNLLSLHTAS (148 aa)) enclose the DAGKc domain. Residues 22 to 24 (NPR) and 54 to 58 (TERQN) each bind ATP. A substrate-binding site is contributed by 79–82 (SGDG). The active-site Proton donor/acceptor is the Asp81. ATP-binding positions include Glu86 and 111 to 113 (GSG). 2 short sequence motifs (nuclear export signal) span residues 147–155 (LSPMNLLSL) and 161–169 (RQLYSVLSL). Position 178 (Asp178) interacts with substrate. The ATP site is built by Arg185 and Arg191. The residue at position 193 (Thr193) is a Phosphothreonine. Ser225 carries the post-translational modification Phosphoserine. Position 340–342 (340–342 (DGE)) interacts with ATP. The disordered stretch occupies residues 363-383 (GSSDSPSGRDSQRRPPPEEPI). Over residues 372 to 383 (DSQRRPPPEEPI) the composition is skewed to basic and acidic residues.

As to quaternary structure, interacts with ACY1. Binds to calmodulin. Interacts with SPHKAP. Interacts with CIB1, the interaction occurs in a calcium-dependent manner. Interacts with TRAF2. Interacts with EEF1A1; the interaction enhances SPHK1 kinase activity. It depends on Mg(2+) as a cofactor. As to expression, expressed in microglia (at protein level).

It localises to the cytoplasm. The protein localises to the nucleus. The protein resides in the cell membrane. It is found in the endosome membrane. Its subcellular location is the membrane. It localises to the clathrin-coated pit. The protein localises to the synapse. The enzyme catalyses a sphingoid base + ATP = a sphingoid 1-phosphate + ADP + H(+). It catalyses the reaction L-seryl-[protein] + acetyl-CoA = O-acetyl-L-seryl-[protein] + CoA. The catalysed reaction is sphinganine + ATP = sphinganine 1-phosphate + ADP + H(+). It carries out the reaction sphing-4-enine + ATP = sphing-4-enine 1-phosphate + ADP + H(+). The enzyme catalyses 1-O-hexadecyl-2-amino-sn-glycerol + ATP = 1-O-hexadecyl-2-desoxy-2-amino-sn-glycero-3-phosphate + ADP + H(+). Acetyltransferase activity increases in presence of the kinase substrate, sphingosine. In Purkinje cells, kinase activity on sphingosine increases in presence of VEGFA. In neurons, kinase activity increases during the first 24h in presence of Amyloid-beta protein 42 to decrease after 96h. Catalyzes the phosphorylation of sphingosine to form sphingosine 1-phosphate (SPP), a lipid mediator with both intra- and extracellular functions. Also acts on D-erythro-sphingosine and to a lesser extent sphinganine, but not other lipids, such as D,L-threo-dihydrosphingosine, N,N-dimethylsphingosine, diacylglycerol, ceramide, or phosphatidylinositol. In contrast to proapoptotic SPHK2, has a negative effect on intracellular ceramide levels, enhances cell growth and inhibits apoptosis. Involved in the regulation of inflammatory response and neuroinflammation. Via the product sphingosine 1-phosphate, stimulates TRAF2 E3 ubiquitin ligase activity, and promotes activation of NF-kappa-B in response to TNF signaling leading to IL17 secretion. In response to TNF and in parallel to NF-kappa-B activation, negatively regulates RANTES induction through p38 MAPK signaling pathway. Involved in endocytic membrane trafficking induced by sphingosine, recruited to dilate endosomes, also plays a role on later stages of endosomal maturation and membrane fusion independently of its kinase activity. In Purkinje cells, seems to be also involved in the regulation of autophagosome-lysosome fusion upon VEGFA. Functionally, has serine acetyltransferase activity on PTGS2/COX2 in an acetyl-CoA dependent manner. The acetyltransferase activity increases in presence of the kinase substrate, sphingosine. During neuroinflammation, through PTGS2 acetylation, promotes neuronal secretion of specialized preresolving mediators (SPMs), especially 15-R-lipoxin A4, which results in an increase of phagocytic microglia. This chain is Sphingosine kinase 1 (Sphk1), found in Rattus norvegicus (Rat).